Consider the following 217-residue polypeptide: Frataxin, mitochondrial (217 aa).

Residues 1-42 (MWTLGRRSVASFLPRSALPGFAPTRAGAPRPAKDLSLSGLPG) constitute a mitochondrion transit peptide.

It belongs to the frataxin family. Component of the mitochondrial core iron-sulfur cluster (ISC) complex composed of NFS1, LYRM4, NDUFAB1, ISCU, FXN, and FDX2; this complex is a heterohexamer containing two copies of each monomer. Homodimer. Monomer (probable predominant form). Oligomer. Monomers and polymeric aggregates of &gt;1 MDa have been isolated from mitochondria. A small fraction of heterologous overexpressed recombinant frataxin forms high-molecular weight aggregates that incorporate iron. Interacts with LYRM4. Interacts (via ferrous form) with ISCU; the interaction is possible when both are bound to the dimeric form of the cysteine desulfurase complex (NFS1:LYRM4) and the interaction enhances FXN interaction to the dimeric form of the cysteine desulfurase complex (NFS1:LYRM4). Interacts with FECH; one iron-bound FXN monomer seems to interact with a FECH homodimer. Interacts with SDHA and SDHB. Interacts with ACO2; the interaction is dependent on citrate. Interacts with HSPA9. As to quaternary structure, interacts with ACO1. Interacts with ISCU (cytoplasmic form). In terms of processing, processed in two steps by mitochondrial processing peptidase (MPP). MPP first cleaves the precursor to intermediate form and subsequently converts the intermediate to yield frataxin mature form (frataxin(81-210)) which is the predominant form. The additional forms, frataxin(56-210) and frataxin(78-210), seem to be produced when the normal maturation process is impaired; their physiological relevance is unsure.

The protein localises to the mitochondrion. It localises to the cytoplasm. Its subcellular location is the cytosol. The catalysed reaction is 4 Fe(2+) + O2 + 4 H(+) = 4 Fe(3+) + 2 H2O. In terms of biological role, functions as an activator of persulfide transfer to the scaffoding protein ISCU as component of the core iron-sulfur cluster (ISC) assembly complex and participates to the [2Fe-2S] cluster assembly. Accelerates sulfur transfer from NFS1 persulfide intermediate to ISCU and to small thiols such as L-cysteine and glutathione leading to persulfuration of these thiols and ultimately sulfide release. Binds ferrous ion and is released from FXN upon the addition of both L-cysteine and reduced FDX2 during [2Fe-2S] cluster assembly. The core iron-sulfur cluster (ISC) assembly complex is involved in the de novo synthesis of a [2Fe-2S] cluster, the first step of the mitochondrial iron-sulfur protein biogenesis. This process is initiated by the cysteine desulfurase complex (NFS1:LYRM4:NDUFAB1) that produces persulfide which is delivered on the scaffold protein ISCU in a FXN-dependent manner. Then this complex is stabilized by FDX2 which provides reducing equivalents to accomplish the [2Fe-2S] cluster assembly. Finally, the [2Fe-2S] cluster is transferred from ISCU to chaperone proteins, including HSCB, HSPA9 and GLRX5. May play a role in the protection against iron-catalyzed oxidative stress through its ability to catalyze the oxidation of Fe(2+) to Fe(3+); the oligomeric form but not the monomeric form has in vitro ferroxidase activity. May be able to store large amounts of iron in the form of a ferrihydrite mineral by oligomerization; however, the physiological relevance is unsure as reports are conflicting and the function has only been shown using heterologous overexpression systems. May function as an iron chaperone protein that protects the aconitase [4Fe-4S]2+ cluster from disassembly and promotes enzyme reactivation. May play a role as a high affinity iron binding partner for FECH that is capable of both delivering iron to ferrochelatase and mediating the terminal step in mitochondrial heme biosynthesis. Its function is as follows. Modulates the RNA-binding activity of ACO1. May be involved in the cytoplasmic iron-sulfur protein biogenesis. May contribute to oxidative stress resistance and overall cell survival. This is Frataxin, mitochondrial from Bos taurus (Bovine).